The chain runs to 90 residues: Putative membrane protein insertion efficiency factor (90 aa).

The segment at 68 to 90 (VPAHFSLRRNPQYKEEDHRGKKR) is disordered. Basic and acidic residues predominate over residues 79 to 90 (QYKEEDHRGKKR).

It belongs to the UPF0161 family.

It is found in the cell membrane. Its function is as follows. Could be involved in insertion of integral membrane proteins into the membrane. This is Putative membrane protein insertion efficiency factor from Lactiplantibacillus plantarum (strain ATCC BAA-793 / NCIMB 8826 / WCFS1) (Lactobacillus plantarum).